A 431-amino-acid chain; its full sequence is Enolase (431 aa).

Residue Q166 coordinates (2R)-2-phosphoglycerate. The active-site Proton donor is E208. Positions 245, 288, and 315 each coordinate Mg(2+). (2R)-2-phosphoglycerate is bound by residues K340, R369, S370, and K391. K340 (proton acceptor) is an active-site residue.

Belongs to the enolase family. The cofactor is Mg(2+).

Its subcellular location is the cytoplasm. The protein resides in the secreted. It localises to the cell surface. It catalyses the reaction (2R)-2-phosphoglycerate = phosphoenolpyruvate + H2O. It functions in the pathway carbohydrate degradation; glycolysis; pyruvate from D-glyceraldehyde 3-phosphate: step 4/5. In terms of biological role, catalyzes the reversible conversion of 2-phosphoglycerate (2-PG) into phosphoenolpyruvate (PEP). It is essential for the degradation of carbohydrates via glycolysis. This is Enolase from Clostridium botulinum (strain Kyoto / Type A2).